We begin with the raw amino-acid sequence, 456 residues long: RuvB-like helicase 1 (456 aa).

70 to 77 (GPPGTGKT) is a binding site for ATP.

The protein belongs to the RuvB family. Forms homohexameric rings. May form a dodecamer with rept made of two stacked hexameric rings. Component of the chromatin remodeling Ino80 complex.

Its subcellular location is the nucleus. The catalysed reaction is ATP + H2O = ADP + phosphate + H(+). In terms of biological role, acts as a transcriptional coactivator in Wg signaling. Functionally, proposed core component of the chromatin remodeling Ino80 complex which is involved in transcriptional regulation, DNA replication and probably DNA repair. The chain is RuvB-like helicase 1 from Aedes aegypti (Yellowfever mosquito).